Consider the following 235-residue polypeptide: Eukaryotic translation initiation factor 4E-1 (235 aa).

Over residues 16 to 25 (VNKHRGVRSD) the composition is skewed to basic and acidic residues. Positions 16–56 (VNKHRGVRSDGEEDEQLEEGEIVGGDADTLSSSSSSRPGTA) are disordered. Acidic residues predominate over residues 26-36 (GEEDEQLEEGE). EIF4G-binding stretches follow at residues 60–63 (HPLE) and 70–106 (FDTPSAKSKQVAWGSSMRPIYTFSSVEEFWSLYNNIH). Residues 78-83 (KQVAWG), Lys110, and 128-129 (WE) contribute to the mRNA site. Cys133 and Cys171 form a disulfide bridge. Residues 154 to 163 (YTLLAMIGEQ) form an EIF4G-binding region. MRNA-binding positions include 178–183 (RARQEK) and 223–227 (KTLDR).

The protein belongs to the eukaryotic initiation factor 4E family. EIF4F is a multi-subunit complex, the composition of which varies with external and internal environmental conditions. It is composed of at least EIF4A, EIF4E and EIF4G. EIF4E is also known to interact with other partners. In higher plants two isoforms of EIF4F have been identified, named isoform EIF4F and isoform EIF(iso)4F. Isoform EIF4F has subunits p220 and p26, whereas isoform EIF(iso)4F has subunits p82 and p28. In terms of assembly, (Microbial infection) Interacts with potyvirus viral genome-linked protein (VPg); this interaction is possible in susceptible hosts but impaired in resistant plants. According to the redox status, the Cys-133-Cys-171 disulfide bridge may have a role in regulating protein function by affecting its ability to bind capped mRNA.

Its subcellular location is the nucleus. It is found in the cytoplasm. In terms of biological role, component of the protein complex eIF4F, which is involved in the recognition of the mRNA cap, ATP-dependent unwinding of 5'-terminal secondary structure and recruitment of mRNA to the ribosome. Recognizes and binds the 7-methylguanosine-containing mRNA cap during an early step in the initiation of protein synthesis and facilitates ribosome binding by inducing the unwinding of the mRNAs secondary structures. Key component of recessive resistance to potyviruses. (Microbial infection) Susceptibility host factor required for viral infection by recruiting viral RNAs to the host ribosomal complex via an interaction with viral genome-linked protein (VPg). The sequence is that of Eukaryotic translation initiation factor 4E-1 from Lactuca sativa (Garden lettuce).